A 678-amino-acid polypeptide reads, in one-letter code: Vacuolar fusion protein mon1 (678 aa).

Disordered stretches follow at residues 1–116 (MDRD…YTSP), 449–474 (EENN…VTSP), and 568–591 (FETS…KTTE). Residues 10–20 (NDGTNDNNDTT) show a composition bias toward low complexity. Positions 63-77 (RPTTQVSTIDISTLS) are enriched in polar residues. Over residues 87–105 (STSATSATSATSATRSVAS) the composition is skewed to low complexity. Residues 106–116 (PQSSASGYTSP) are compositionally biased toward polar residues. A compositionally biased stretch (low complexity) spans 450–459 (ENNSNNTNNP). Pro residues predominate over residues 460 to 471 (EQPPQPPPPKPV).

This sequence belongs to the MON1/SAND family.

The protein localises to the endosome. The protein resides in the multivesicular body membrane. Its subcellular location is the prevacuolar compartment membrane. It is found in the vacuole membrane. In complex with CCZ1, is required for multiple vacuole delivery pathways including the cytoplasm to vacuole transport (Cvt), autophagy, pexophagy and endocytosis. The MON1-CCZ1 complex acts at the fusion of vesicles with the vacuole, through its regulation of the SNARE complex during the coordinated priming and docking stages of fusion, and particularly at the stage of tethering/docking. In Neurospora crassa (strain ATCC 24698 / 74-OR23-1A / CBS 708.71 / DSM 1257 / FGSC 987), this protein is Vacuolar fusion protein mon1 (apg-13).